The following is an 89-amino-acid chain: Large ribosomal subunit protein bL27 (89 aa).

The tract at residues 1 to 20 (MAHKKAGGSSRNGRDSIGRR) is disordered.

Belongs to the bacterial ribosomal protein bL27 family.

This is Large ribosomal subunit protein bL27 from Ruegeria pomeroyi (strain ATCC 700808 / DSM 15171 / DSS-3) (Silicibacter pomeroyi).